We begin with the raw amino-acid sequence, 501 residues long: Symplectin (501 aa).

One can recognise a CN hydrolase domain in the interval 20–287 (PKTDMETREE…SKLLVAEILP (268 aa)). E60 functions as the Proton acceptor in the catalytic mechanism. The active-site Proton donor is the K163. The active-site Nucleophile is the C196. An S-(coelenterazin-3a-yl)cysteine modification is found at C390.

The protein belongs to the carbon-nitrogen hydrolase superfamily. BTD/VNN family. In terms of tissue distribution, photogenic gland (at protein level).

Functionally, monovalent ion-dependent bioluminescence photoprotein. Displays an emission peak at 470 nm (blue light). Trace amounts of monovalent ion trigger the intramolecular oxidation of the chromophore, didehydrocoelenterazine, with the emission of light. This is Symplectin from Sthenoteuthis oualaniensis (Purpleback flying squid).